The following is a 188-amino-acid chain: MMKFGFDIDDTLIRLREHAFHIYQRKLNQQVDIEKFHQLERVEIHELFSLNEQEGKQMWEDSLEEIYFTDCPIYPGALETVLQLEELGHEIYYITARPKLHGEQTKAWLRQNEFPVLDSHFFYGMKDNEKMEIIQGLDLDYYVDDKPTVLDTLTKTNTKLLIKDQSYNRNKKSFARIIDWHDFLQNKL.

This sequence belongs to the 5'(3')-deoxyribonucleotidase family.

The protein is Putative nucleotidase OB0422 of Oceanobacillus iheyensis (strain DSM 14371 / CIP 107618 / JCM 11309 / KCTC 3954 / HTE831).